Here is a 309-residue protein sequence, read N- to C-terminus: Ribosomal RNA small subunit methyltransferase H (309 aa).

Residues 33–35 (GGH), Asp53, Phe79, Asp100, and Gln107 each bind S-adenosyl-L-methionine.

It belongs to the methyltransferase superfamily. RsmH family.

The protein localises to the cytoplasm. The enzyme catalyses cytidine(1402) in 16S rRNA + S-adenosyl-L-methionine = N(4)-methylcytidine(1402) in 16S rRNA + S-adenosyl-L-homocysteine + H(+). Specifically methylates the N4 position of cytidine in position 1402 (C1402) of 16S rRNA. This chain is Ribosomal RNA small subunit methyltransferase H, found in Clostridium botulinum (strain 657 / Type Ba4).